The sequence spans 489 residues: 6-phosphogluconate dehydrogenase, decarboxylating 1 (489 aa).

Residues Gly9–Gly14 and Asn32–Thr34 contribute to the NADP(+) site. Ser50 bears the Phosphoserine mark. Residues Val74–Ala76 and Asn102 contribute to the NADP(+) site. Residues Asn102 and Ser128–Gly130 contribute to the substrate site. Lys182 serves as the catalytic Proton acceptor. His185–Asn186 provides a ligand contact to substrate. Glu189 functions as the Proton donor in the catalytic mechanism. Positions 190, 259, 286, 446, and 452 each coordinate substrate.

This sequence belongs to the 6-phosphogluconate dehydrogenase family. As to quaternary structure, homodimer.

The protein localises to the cytoplasm. It carries out the reaction 6-phospho-D-gluconate + NADP(+) = D-ribulose 5-phosphate + CO2 + NADPH. The protein operates within carbohydrate degradation; pentose phosphate pathway; D-ribulose 5-phosphate from D-glucose 6-phosphate (oxidative stage): step 3/3. Functionally, catalyzes the oxidative decarboxylation of 6-phosphogluconate to ribulose 5-phosphate and CO(2), with concomitant reduction of NADP to NADPH. This chain is 6-phosphogluconate dehydrogenase, decarboxylating 1 (GND1), found in Saccharomyces cerevisiae (strain ATCC 204508 / S288c) (Baker's yeast).